The chain runs to 216 residues: MOB kinase activator 3B (216 aa).

Residues Cys82, Cys87, His164, and His169 each contribute to the Zn(2+) site.

In terms of biological role, modulates LATS1 expression in the Hippo signaling pathway which plays a pivotal role in organ size control and tumor suppression by restricting proliferation and promoting apoptosis. The protein is MOB kinase activator 3B (Mob3b) of Mus musculus (Mouse).